Here is a 238-residue protein sequence, read N- to C-terminus: Sugar fermentation stimulation protein homolog (238 aa).

This sequence belongs to the SfsA family.

The protein is Sugar fermentation stimulation protein homolog of Brucella abortus (strain S19).